The sequence spans 206 residues: Holliday junction branch migration complex subunit RuvA (206 aa).

The segment at 1-63 (MIASLRGTVI…EDAMKLYGFI (63 aa)) is domain I. The interval 64-142 (DNESREMFSV…AFAAGVVDEG (79 aa)) is domain II. The flexible linker stretch occupies residues 143 to 153 (GEQISLPNANI). Residues 154-206 (ASEVVVEQVSQALVGLGFSEKQSDDAVSFVLAADPSLDTSGALRAALAKLSGK) form a domain III region.

It belongs to the RuvA family. Homotetramer. Forms an RuvA(8)-RuvB(12)-Holliday junction (HJ) complex. HJ DNA is sandwiched between 2 RuvA tetramers; dsDNA enters through RuvA and exits via RuvB. An RuvB hexamer assembles on each DNA strand where it exits the tetramer. Each RuvB hexamer is contacted by two RuvA subunits (via domain III) on 2 adjacent RuvB subunits; this complex drives branch migration. In the full resolvosome a probable DNA-RuvA(4)-RuvB(12)-RuvC(2) complex forms which resolves the HJ.

It is found in the cytoplasm. The RuvA-RuvB-RuvC complex processes Holliday junction (HJ) DNA during genetic recombination and DNA repair, while the RuvA-RuvB complex plays an important role in the rescue of blocked DNA replication forks via replication fork reversal (RFR). RuvA specifically binds to HJ cruciform DNA, conferring on it an open structure. The RuvB hexamer acts as an ATP-dependent pump, pulling dsDNA into and through the RuvAB complex. HJ branch migration allows RuvC to scan DNA until it finds its consensus sequence, where it cleaves and resolves the cruciform DNA. The protein is Holliday junction branch migration complex subunit RuvA of Corynebacterium glutamicum (strain ATCC 13032 / DSM 20300 / JCM 1318 / BCRC 11384 / CCUG 27702 / LMG 3730 / NBRC 12168 / NCIMB 10025 / NRRL B-2784 / 534).